Consider the following 324-residue polypeptide: MATH domain and coiled-coil domain-containing protein At3g44790 (324 aa).

The MATH domain maps to 3-125 (YEKFTWVIKN…NNEVKIVVEV (123 aa)). Positions 241–309 (FKVDWLERKL…ALLEKEKAKS (69 aa)) form a coiled coil.

The protein is MATH domain and coiled-coil domain-containing protein At3g44790 of Arabidopsis thaliana (Mouse-ear cress).